The primary structure comprises 133 residues: Sec-independent protein translocase protein TatB (133 aa).

The helical transmembrane segment at 1–21 threads the bilayer; sequence MFDIGFWELVLIAIVALVVLG. The tract at residues 67-133 is disordered; that stretch reads EQMGMQNLSP…ASQPAEKKAE (67 aa). A compositionally biased stretch (polar residues) spans 70–84; sequence GMQNLSPELQKSVES. Low complexity predominate over residues 97–116; it reads AATPSSEASSTSSNPSSATE.

Belongs to the TatB family. In terms of assembly, the Tat system comprises two distinct complexes: a TatABC complex, containing multiple copies of TatA, TatB and TatC subunits, and a separate TatA complex, containing only TatA subunits. Substrates initially bind to the TatABC complex, which probably triggers association of the separate TatA complex to form the active translocon.

It is found in the cell inner membrane. Functionally, part of the twin-arginine translocation (Tat) system that transports large folded proteins containing a characteristic twin-arginine motif in their signal peptide across membranes. Together with TatC, TatB is part of a receptor directly interacting with Tat signal peptides. TatB may form an oligomeric binding site that transiently accommodates folded Tat precursor proteins before their translocation. This is Sec-independent protein translocase protein TatB from Vibrio cholerae serotype O1 (strain ATCC 39315 / El Tor Inaba N16961).